The following is a 626-amino-acid chain: Procollagen galactosyltransferase 2 (626 aa).

The first 27 residues, 1 to 27 (MAARPAATLAWSLLLLSSALLREGCRA), serve as a signal peptide directing secretion. N-linked (GlcNAc...) asparagine glycosylation is found at N97, N185, N382, and N580. The disordered stretch occupies residues 604–626 (NAKNTEALPPPTSLDTVPSRDEL). The Prevents secretion from ER signature appears at 623–626 (RDEL).

It belongs to the glycosyltransferase 25 family. Expressed in brain and skeletal muscle.

It is found in the endoplasmic reticulum lumen. It catalyses the reaction (5R)-5-hydroxy-L-lysyl-[collagen] + UDP-alpha-D-galactose = (5R)-5-O-(beta-D-galactosyl)-5-hydroxy-L-lysyl-[collagen] + UDP + H(+). In terms of biological role, beta-galactosyltransferase that transfers beta-galactose to hydroxylysine residues of collagen. In Homo sapiens (Human), this protein is Procollagen galactosyltransferase 2 (COLGALT2).